Reading from the N-terminus, the 147-residue chain is Large ribosomal subunit protein uL15 (147 aa).

The segment covering 1 to 28 (MIRRRKKVRKLRGSHTHGWGCKKKHRGG) has biased composition (basic residues). A disordered region spans residues 1 to 43 (MIRRRKKVRKLRGSHTHGWGCKKKHRGGGSKGGRGMAGTGKRN). Gly residues predominate over residues 29 to 38 (GSKGGRGMAG).

Belongs to the universal ribosomal protein uL15 family. In terms of assembly, part of the 50S ribosomal subunit.

In terms of biological role, binds to the 23S rRNA. The chain is Large ribosomal subunit protein uL15 from Pyrococcus abyssi (strain GE5 / Orsay).